A 261-amino-acid chain; its full sequence is 4-phosphopantoate--beta-alanine ligase (261 aa).

ATP contacts are provided by residues Arg17, Arg39, 181 to 182 (DL), 187 to 188 (RS), and 199 to 200 (NI).

The protein belongs to the archaeal phosphopantothenate synthetase family. Homodimer.

It catalyses the reaction (R)-4-phosphopantoate + beta-alanine + ATP = (R)-4'-phosphopantothenate + AMP + diphosphate + H(+). Its pathway is cofactor biosynthesis; coenzyme A biosynthesis. Functionally, catalyzes the condensation of (R)-4-phosphopantoate and beta-alanine to 4'-phosphopantothenate in the CoA biosynthesis pathway. The protein is 4-phosphopantoate--beta-alanine ligase of Thermococcus onnurineus (strain NA1).